Consider the following 130-residue polypeptide: MARVKRAVNAHKKRRVILERAEGYRGQRSRLYRKAKEQVTHSLVYAYRDRRQKKGDFRRLWIQRINAASRANGLTYNRFIQGLGLAGVEVDRRILAELAVNEPATFTALVETAKKALPADTSAPKADAAA.

Belongs to the bacterial ribosomal protein bL20 family.

Functionally, binds directly to 23S ribosomal RNA and is necessary for the in vitro assembly process of the 50S ribosomal subunit. It is not involved in the protein synthesizing functions of that subunit. This chain is Large ribosomal subunit protein bL20, found in Leifsonia xyli subsp. xyli (strain CTCB07).